An 831-amino-acid polypeptide reads, in one-letter code: Translation initiation factor IF-2 (831 aa).

Positions 116 to 157 (IEPLETDKEVEQKQQNTEENKVEVSAKIVQDDEDIPSQIPKK) are disordered. Basic and acidic residues predominate over residues 117-139 (EPLETDKEVEQKQQNTEENKVEV). The tr-type G domain occupies 329–499 (TRAPVVTVMG…LLIAEMQDLK (171 aa)). The segment at 338 to 345 (GHVDHGKT) is G1. GTP is bound at residue 338-345 (GHVDHGKT). The tract at residues 363 to 367 (GITQH) is G2. Residues 385–388 (DTPG) are G3. GTP-binding positions include 385–389 (DTPGH) and 439–442 (NKID). The segment at 439–442 (NKID) is G4. Residues 475–477 (SAL) are G5.

The protein belongs to the TRAFAC class translation factor GTPase superfamily. Classic translation factor GTPase family. IF-2 subfamily.

The protein resides in the cytoplasm. Functionally, one of the essential components for the initiation of protein synthesis. Protects formylmethionyl-tRNA from spontaneous hydrolysis and promotes its binding to the 30S ribosomal subunits. Also involved in the hydrolysis of GTP during the formation of the 70S ribosomal complex. The chain is Translation initiation factor IF-2 from Rickettsia conorii (strain ATCC VR-613 / Malish 7).